The primary structure comprises 479 residues: GTPase Obg (479 aa).

The region spanning Pro2–Val159 is the Obg domain. Residues Ala160–Ser341 enclose the OBG-type G domain. GTP is bound by residues Gly166–Ser173, Phe191–Val195, Asp212–Gly215, Asn292–Asp295, and Ser322–Val324. Residues Ser173 and Thr193 each contribute to the Mg(2+) site. Residues Pro359–Pro437 enclose the OCT domain. A disordered region spans residues Gln438–Gly479. The segment covering Val469–Gly479 has biased composition (basic residues).

This sequence belongs to the TRAFAC class OBG-HflX-like GTPase superfamily. OBG GTPase family. As to quaternary structure, monomer. Mg(2+) serves as cofactor.

Its subcellular location is the cytoplasm. Its function is as follows. An essential GTPase which binds GTP, GDP and possibly (p)ppGpp with moderate affinity, with high nucleotide exchange rates and a fairly low GTP hydrolysis rate. Plays a role in control of the cell cycle, stress response, ribosome biogenesis and in those bacteria that undergo differentiation, in morphogenesis control. This Mycobacterium leprae (strain Br4923) protein is GTPase Obg.